Consider the following 117-residue polypeptide: uncharacterized protein (117 aa).

The protein belongs to the transposase 34 family.

This is an uncharacterized protein from Sinorhizobium fredii (strain NBRC 101917 / NGR234).